The following is a 623-amino-acid chain: Chaperone protein dnaK (623 aa).

The disordered stretch occupies residues 598–623 (TPDAGAEGGAAPSQDDAIETDFSTEK).

Belongs to the heat shock protein 70 family.

Its subcellular location is the plastid. It is found in the chloroplast. Acts as a chaperone. This is Chaperone protein dnaK from Emiliania huxleyi (Coccolithophore).